Here is a 468-residue protein sequence, read N- to C-terminus: MTSQLHKKGEAWSARFSEPMSELVKRYTSSVFFDKRLALVDIEGSLAHASMLAAQKIISADDLAAIQRGMAQIQGEIERGEFEWQLDLEDVHLNIEARLTALIGDAGKRLHTGRSRNDQVATDIRLWLRGEIDRIGDLLKGLRSALLDLAEQNADTIMPGFTHLQVAQPVTFGHHLLAYVEMFSRDAERMLDTRKRVNRLPLGAAALAGTSYPIDRHAVAKTLGFDGICANSLDAVSDRDFAIEFTAASALVMTHVSRFSEELVLWMSPRVGFIDIADRFCTGSSIMPQKKNPDVPELARGKTGRVNGHLMALLTLMKGQPLAYNKDNQEDKEPLFDTVDTVADTLRIFAEMVAGITVKSENMRGAALQGFSTATDLADYLVKRGLPFRDAHEAVAHAVKVCDDRGCDLSDLTLDEMKAELPNVAALLGDDVFGYLTLEGSVASRNHAGGTAPDQVRAAIAAARAALG.

It belongs to the lyase 1 family. Argininosuccinate lyase subfamily.

The protein resides in the cytoplasm. The enzyme catalyses 2-(N(omega)-L-arginino)succinate = fumarate + L-arginine. Its pathway is amino-acid biosynthesis; L-arginine biosynthesis; L-arginine from L-ornithine and carbamoyl phosphate: step 3/3. In Paraburkholderia phymatum (strain DSM 17167 / CIP 108236 / LMG 21445 / STM815) (Burkholderia phymatum), this protein is Argininosuccinate lyase.